The sequence spans 1017 residues: Probable beta-galactosidase B (1017 aa).

The signal sequence occupies residues Met1–Ala20. Asn23 is a glycosylation site (N-linked (GlcNAc...) asparagine). A substrate-binding site is contributed by Tyr90. Asn100 carries N-linked (GlcNAc...) asparagine glycosylation. Substrate contacts are provided by Asn135, Ala136, and Glu137. Asn158 carries an N-linked (GlcNAc...) asparagine glycan. Position 195 (Asn195) interacts with substrate. Glu196 serves as the catalytic Proton donor. The N-linked (GlcNAc...) asparagine glycan is linked to Asn211. Residue Tyr265 coordinates substrate. Residues Cys271 and Cys324 are joined by a disulfide bond. Glu308 acts as the Nucleophile in catalysis. Tyr373 contacts substrate. Residues Asn411, Asn417, Asn456, Asn628, Asn681, Asn737, Asn770, Asn777, Asn785, Asn828, and Asn829 are each glycosylated (N-linked (GlcNAc...) asparagine).

The protein belongs to the glycosyl hydrolase 35 family.

Its subcellular location is the secreted. It carries out the reaction Hydrolysis of terminal non-reducing beta-D-galactose residues in beta-D-galactosides.. Cleaves beta-linked terminal galactosyl residues from gangliosides, glycoproteins, and glycosaminoglycans. In Aspergillus niger (strain ATCC MYA-4892 / CBS 513.88 / FGSC A1513), this protein is Probable beta-galactosidase B (lacB).